Consider the following 49-residue polypeptide: Large ribosomal subunit protein bL33 (49 aa).

Belongs to the bacterial ribosomal protein bL33 family.

The sequence is that of Large ribosomal subunit protein bL33 from Thermosipho melanesiensis (strain DSM 12029 / CIP 104789 / BI429).